The following is a 490-amino-acid chain: AP-5 complex subunit mu-1 (490 aa).

The MHD domain occupies Lys-206–Asn-476.

It belongs to the adaptor complexes medium subunit family. In terms of assembly, probably part of the adaptor protein complex 5 (AP-5) a tetramer composed of AP5B1, AP5M1, AP5S1 and AP5Z1. In terms of tissue distribution, expressed in various tumor cell lines including Jurkat, Hep-G2 and HeLa.

It localises to the cytoplasm. Its subcellular location is the cytosol. It is found in the late endosome membrane. The protein localises to the lysosome membrane. Its function is as follows. As part of AP-5, a probable fifth adaptor protein complex it may be involved in endosomal transport. According to PubMed:18395520, it may play a role in cell death. The chain is AP-5 complex subunit mu-1 (AP5M1) from Homo sapiens (Human).